A 147-amino-acid chain; its full sequence is Large ribosomal subunit protein uL15 (147 aa).

A disordered region spans residues 16–63 (SSRARVGRGIGSGLGKTAGRGHKGSFARKGGGKIKPGFEGGQTPMQRR). A compositionally biased stretch (gly residues) spans 23–33 (RGIGSGLGKTA). Residues 34 to 47 (GRGHKGSFARKGGG) are compositionally biased toward basic residues.

This sequence belongs to the universal ribosomal protein uL15 family. As to quaternary structure, part of the 50S ribosomal subunit.

Its function is as follows. Binds to the 23S rRNA. The protein is Large ribosomal subunit protein uL15 of Xylella fastidiosa (strain Temecula1 / ATCC 700964).